Here is a 457-residue protein sequence, read N- to C-terminus: Argininosuccinate lyase (457 aa).

Belongs to the lyase 1 family. Argininosuccinate lyase subfamily.

It localises to the cytoplasm. It carries out the reaction 2-(N(omega)-L-arginino)succinate = fumarate + L-arginine. Its pathway is amino-acid biosynthesis; L-arginine biosynthesis; L-arginine from L-ornithine and carbamoyl phosphate: step 3/3. This chain is Argininosuccinate lyase, found in Cronobacter sakazakii (strain ATCC BAA-894) (Enterobacter sakazakii).